The following is a 155-amino-acid chain: Small ribosomal subunit protein uS17 (155 aa).

A2 carries the N-acetylalanine modification.

This sequence belongs to the universal ribosomal protein uS17 family.

This chain is Small ribosomal subunit protein uS17, found in Drosophila yakuba (Fruit fly).